A 78-amino-acid polypeptide reads, in one-letter code: Large ribosomal subunit protein bL28 (78 aa).

Positions 1-22 (MSKVCQVTGKRPTTGNNVSHAN) are disordered. Positions 11–22 (RPTTGNNVSHAN) are enriched in polar residues.

This sequence belongs to the bacterial ribosomal protein bL28 family.

This chain is Large ribosomal subunit protein bL28, found in Alkalilimnicola ehrlichii (strain ATCC BAA-1101 / DSM 17681 / MLHE-1).